The following is a 208-amino-acid chain: UPF0637 protein BCB4264_A4063 (208 aa).

The protein belongs to the UPF0637 family.

This is UPF0637 protein BCB4264_A4063 from Bacillus cereus (strain B4264).